Reading from the N-terminus, the 281-residue chain is UPF0046 protein C25E10.12 (281 aa).

Belongs to the UPF0046 family.

The sequence is that of UPF0046 protein C25E10.12 from Caenorhabditis elegans.